A 267-amino-acid polypeptide reads, in one-letter code: 7alpha-hydroxysteroid dehydrogenase (267 aa).

NADP(+)-binding positions include 13 to 18 (SATRGI), R38, 63 to 64 (DA), and N90. 2 residues coordinate cholate: S145 and Y158. NADP(+)-binding positions include Y158, K162, and 191-195 (IATDA). Residue Y158 is the Proton acceptor of the active site.

The protein belongs to the short-chain dehydrogenases/reductases (SDR) family. As to quaternary structure, homotetramer.

The catalysed reaction is cholate + NADP(+) = 3alpha,12alpha-dihydroxy-7-oxo-5beta-cholanate + NADPH + H(+). The enzyme catalyses chenodeoxycholate + NADP(+) = 7-oxolithocholate + NADPH + H(+). Functionally, 7alpha-hydroxysteroid dehydrogenase that catalyzes the NADP(+)-dependent oxidation of the 7alpha-hydroxy group of 7alpha-hydroxysteroids, such as the major human bile acids cholate and chenodeoxycholate, to the corresponding 7-oxosteroids. Is thus liley involved in the metabolism of primary bile acids. The sequence is that of 7alpha-hydroxysteroid dehydrogenase from Paraclostridium sordellii (Clostridium sordellii).